A 128-amino-acid polypeptide reads, in one-letter code: 14 kDa zinc-binding protein (128 aa).

Positions 18-128 (IFDKIIKKEI…GGRQMNWPPG (111 aa)) constitute an HIT domain. The Histidine triad motif motif lies at 112–116 (HIHVH).

As to quaternary structure, homodimer.

This chain is 14 kDa zinc-binding protein (ZBP14), found in Zea mays (Maize).